Reading from the N-terminus, the 330-residue chain is Diacylglycerol acyltransferase/mycolyltransferase Ag85B (330 aa).

Residues 1–40 form the signal peptide; it reads MTDLSKKVRAWGRRLLVGTAAAVTLPGLIGLAGGAPTAGA. Substrate is bound at residue 82–83; it reads LR. A fibronectin-binding region spans residues 98–108; the sequence is FEWYYQSGLSI. An intrachain disulfide couples Cys-127 to Cys-132. Substrate-binding residues include Ser-166 and Asp-194. Ser-166 functions as the Nucleophile in the catalytic mechanism. Residue Glu-270 is part of the active site. Substrate-binding positions include 272–275, Lys-279, and 302–304; these read FVRS and HSW. The active site involves His-302.

The protein belongs to the mycobacterial A85 antigen family.

It is found in the secreted. The enzyme catalyses 2 alpha,alpha'-trehalose 6-mycolate = alpha,alpha'-trehalose 6,6'-bismycolate + alpha,alpha-trehalose. It carries out the reaction an acyl-CoA + a 1,2-diacyl-sn-glycerol = a triacyl-sn-glycerol + CoA. In terms of biological role, the antigen 85 proteins (FbpA, FbpB, FbpC) are responsible for the high affinity of mycobacteria for fibronectin, a large adhesive glycoprotein, which facilitates the attachment of M.tuberculosis to murine alveolar macrophages (AMs). They also help to maintain the integrity of the cell wall by catalyzing the transfer of mycolic acids to cell wall arabinogalactan and through the synthesis of alpha,alpha-trehalose dimycolate (TDM, cord factor). They catalyze the transfer of a mycoloyl residue from one molecule of alpha,alpha-trehalose monomycolate (TMM) to another TMM, leading to the formation of TDM. This chain is Diacylglycerol acyltransferase/mycolyltransferase Ag85B (fbpB), found in Mycobacterium scrofulaceum.